The primary structure comprises 35 residues: Photosystem II reaction center protein T (35 aa).

The helical transmembrane segment at 3-23 (ALVYTFLLVSTLGIIFFAIFF) threads the bilayer.

It belongs to the PsbT family. In terms of assembly, PSII is composed of 1 copy each of membrane proteins PsbA, PsbB, PsbC, PsbD, PsbE, PsbF, PsbH, PsbI, PsbJ, PsbK, PsbL, PsbM, PsbT, PsbY, PsbZ, Psb30/Ycf12, at least 3 peripheral proteins of the oxygen-evolving complex and a large number of cofactors. It forms dimeric complexes.

It localises to the plastid. Its subcellular location is the chloroplast thylakoid membrane. Its function is as follows. Found at the monomer-monomer interface of the photosystem II (PS II) dimer, plays a role in assembly and dimerization of PSII. PSII is a light-driven water plastoquinone oxidoreductase, using light energy to abstract electrons from H(2)O, generating a proton gradient subsequently used for ATP formation. This chain is Photosystem II reaction center protein T, found in Pinus thunbergii (Japanese black pine).